Reading from the N-terminus, the 267-residue chain is 2-oxo-hept-4-ene-1,7-dioate hydratase (267 aa).

The Mg(2+) site is built by glutamate 106, glutamate 108, and glutamate 139.

It belongs to the hydratase/decarboxylase family. In terms of assembly, homodecamer. Requires Mg(2+) as cofactor.

It catalyses the reaction (4Z)-2-oxohept-4-enedioate + H2O = (4S)-4-hydroxy-2-oxoheptanedioate. It participates in aromatic compound metabolism; 4-hydroxyphenylacetate degradation; pyruvate and succinate semialdehyde from 4-hydroxyphenylacetate: step 6/7. Its function is as follows. Transforms 2-oxo-hept-4-ene-1,7-dioate (OHED) into 4-hydroxy-2-oxoheptanedioate, a step in the 4-hydroxyphenylacetic acid (4-HPA) degradation pathway. This is 2-oxo-hept-4-ene-1,7-dioate hydratase from Escherichia coli.